The chain runs to 635 residues: Glycosyltransferase-like protein gnt13 (635 aa).

Over 1–18 the chain is Cytoplasmic; it reads MNINTLIINFNKVKRMKN. A helical; Signal-anchor for type II membrane protein transmembrane segment spans residues 19–38; sequence FLILTLLVVMVVVFLQGPTL. The Extracellular segment spans residues 39-635; it reads MINNSGQGMG…PNECFSDHHW (597 aa). Residues Asn-41 and Asn-179 are each glycosylated (N-linked (GlcNAc...) asparagine). 2 disordered regions span residues 300–358 and 389–458; these read NINN…NNID and NIDN…NNEP. Residues 389–456 are compositionally biased toward low complexity; sequence NIDNNNSNYN…NNNNNNNNNN (68 aa). N-linked (GlcNAc...) asparagine glycosylation is found at Asn-393 and Asn-535.

It belongs to the glycosyltransferase 8 family. Highly divergent.

It localises to the membrane. This Dictyostelium discoideum (Social amoeba) protein is Glycosyltransferase-like protein gnt13 (gnt13).